The sequence spans 858 residues: Tetratricopeptide repeat protein 7A (858 aa).

Serine 51 bears the Phosphoserine mark. TPR repeat units lie at residues 121 to 157 (CEAM…MENK), 177 to 210 (ERLP…AQVF), 414 to 447 (FHLW…RPSD), 497 to 531 (YSLQ…APSD), 533 to 565 (QVIL…RKDD), and 566 to 599 (AHAL…HPEN). Serine 182 is subject to Phosphoserine. Residues serine 647, serine 678, serine 679, and serine 690 each carry the phosphoserine modification. A Phosphothreonine modification is found at threonine 693. 3 TPR repeats span residues 745–778 (HSVL…NPDG), 780–812 (RIMH…QSTC), and 813–846 (HEAW…EASS).

In terms of assembly, component of a phosphatidylinositol 4-kinase (PI4K) complex, composed of PI4KA, EFR3 (EFR3A or EFR3B), TTC7 (TTC7A or TTC7B) and HYCC (HYCC1 or HYCC2). Interacts with PI4KA. Interaction with PI4KA is direct. Interacts with EFR3 (EFR3A or EFR3B), interaction is direct. Interacts with HYCC (HYCC1 or HYCC2), interaction is direct. Association with the PI4K complex is strongly reduced by TMEM150A. In terms of tissue distribution, expressed in epithelial cells of the intestine, thymus, and pancreas (at protein level).

The protein localises to the cytoplasm. It localises to the cell membrane. Functionally, component of a complex required to localize phosphatidylinositol 4-kinase (PI4K) to the plasma membrane. The complex acts as a regulator of phosphatidylinositol 4-phosphate (PtdIns(4)P) synthesis. In the complex, plays a central role in bridging PI4KA to EFR3B and HYCC1, via direct interactions. This Homo sapiens (Human) protein is Tetratricopeptide repeat protein 7A.